The primary structure comprises 332 residues: L-lactate dehydrogenase A chain (332 aa).

NAD(+)-binding positions include 29–57 (GAVG…VEDK) and R99. Residues R106, N138, and R169 each contribute to the substrate site. N138 serves as a coordination point for NAD(+). Catalysis depends on H193, which acts as the Proton acceptor. Substrate is bound at residue T248.

The protein belongs to the LDH/MDH superfamily. LDH family. As to quaternary structure, homotetramer.

Its subcellular location is the cytoplasm. The enzyme catalyses (S)-lactate + NAD(+) = pyruvate + NADH + H(+). It functions in the pathway fermentation; pyruvate fermentation to lactate; (S)-lactate from pyruvate: step 1/1. Functionally, interconverts simultaneously and stereospecifically pyruvate and lactate with concomitant interconversion of NADH and NAD(+). This Alligator mississippiensis (American alligator) protein is L-lactate dehydrogenase A chain (LDHA).